Consider the following 450-residue polypeptide: Tol-Pal system protein TolB (450 aa).

An N-terminal signal peptide occupies residues 1-47; it reads MRKLWAPNWLSAKRHHANQAATRLIGRHALMAWLAAALALSAGAAQA.

It belongs to the TolB family. As to quaternary structure, the Tol-Pal system is composed of five core proteins: the inner membrane proteins TolA, TolQ and TolR, the periplasmic protein TolB and the outer membrane protein Pal. They form a network linking the inner and outer membranes and the peptidoglycan layer.

It localises to the periplasm. In terms of biological role, part of the Tol-Pal system, which plays a role in outer membrane invagination during cell division and is important for maintaining outer membrane integrity. This is Tol-Pal system protein TolB from Cupriavidus pinatubonensis (strain JMP 134 / LMG 1197) (Cupriavidus necator (strain JMP 134)).